The primary structure comprises 112 residues: Iron-sulfur cluster assembly protein CyaY (112 aa).

Belongs to the frataxin family.

Its function is as follows. Involved in iron-sulfur (Fe-S) cluster assembly. May act as a regulator of Fe-S biogenesis. This Herminiimonas arsenicoxydans protein is Iron-sulfur cluster assembly protein CyaY.